Here is a 388-residue protein sequence, read N- to C-terminus: Pentatricopeptide repeat-containing protein 2, mitochondrial (388 aa).

The PPR repeat unit spans residues 166-200 (TSFNILMDMLFIKGKYKSALQVLIEMKNQDVKFTK). Serine 382 bears the Phosphoserine mark.

Belongs to the PTCD2 family.

The protein localises to the mitochondrion. In terms of biological role, involved in mitochondrial RNA maturation and mitochondrial respiratory chain function. The chain is Pentatricopeptide repeat-containing protein 2, mitochondrial (PTCD2) from Homo sapiens (Human).